We begin with the raw amino-acid sequence, 127 residues long: MDEKARLLRVRARLKRKKPKFLRQEWWRFPKFKNDPKWRRPKGIDSKMRLKKKGKPRSPSIGWSSPRAVRGLHPSGYEEVLVHNVKELEAIDPTRQAARIARTVGARKREAIIARAKELGIKVLNAR.

Residues 38-48 (WRRPKGIDSKM) are compositionally biased toward basic and acidic residues. A disordered region spans residues 38–66 (WRRPKGIDSKMRLKKKGKPRSPSIGWSSP).

It belongs to the eukaryotic ribosomal protein eL32 family.

The sequence is that of Large ribosomal subunit protein eL32 from Thermococcus gammatolerans (strain DSM 15229 / JCM 11827 / EJ3).